Here is a 458-residue protein sequence, read N- to C-terminus: Acetyl-CoA decarbonylase/synthase complex subunit gamma (458 aa).

Positions 1 to 59 constitute a 4Fe-4S domain; sequence MQVTAMDVYRLLPKTNCGKCNEASCMAFATKLIEKEVTLDDCPQLSGDERQKLENLLAP. Positions 17, 20, 25, and 42 each coordinate [4Fe-4S] cluster.

As to quaternary structure, heterodimer of delta and gamma chains. The ACDS complex is made up of alpha, epsilon, beta, gamma and delta chains with a probable stoichiometry of (alpha(2)epsilon(2))(4)-beta(8)-(gamma(1)delta(1))(8). It depends on corrinoid as a cofactor. Requires [4Fe-4S] cluster as cofactor.

It catalyses the reaction 5,6,7,8-tetrahydrosarcinapterin + methyl-Co(III)-[corrinoid Fe-S protein] = 5-methyltetrahydrosarcinapterin + Co(I)-[corrinoid Fe-S protein] + H(+). Part of a complex that catalyzes the reversible cleavage of acetyl-CoA, allowing autotrophic growth from CO(2). The chain is Acetyl-CoA decarbonylase/synthase complex subunit gamma from Methanothermobacter thermautotrophicus (strain ATCC 29096 / DSM 1053 / JCM 10044 / NBRC 100330 / Delta H) (Methanobacterium thermoautotrophicum).